A 537-amino-acid polypeptide reads, in one-letter code: Cytochrome P450 CYP12A2 (537 aa).

Cysteine 483 contributes to the heme binding site.

This sequence belongs to the cytochrome P450 family. Requires heme as cofactor.

The polypeptide is Cytochrome P450 CYP12A2 (CYP12A2) (Musca domestica (House fly)).